The following is a 144-amino-acid chain: MYPAHLLVLLAVCVSLLGASDIPPQPLNLYQFGNMIQCANHGRRPTQHYTDYGCYCGKGGSGTPVDELDRCCKTHDDCYTEAGKKGCYPKLTLYSWKCGSDGPQCDDSETGCQRFVCDCDATAAKCFAKAPYNKENYNIKTPCQ.

A signal peptide spans 1–19; the sequence is MYPAHLLVLLAVCVSLLGA. Residues 20 to 27 constitute a propeptide that is removed on maturation; that stretch reads SDIPPQPL. Disulfide bonds link cysteine 38–cysteine 98, cysteine 54–cysteine 143, cysteine 56–cysteine 72, cysteine 71–cysteine 126, cysteine 78–cysteine 119, cysteine 87–cysteine 112, and cysteine 105–cysteine 117. Positions 55, 57, and 59 each coordinate Ca(2+). Histidine 75 is an active-site residue. Ca(2+) is bound at residue aspartate 76. Aspartate 120 is an active-site residue.

The protein belongs to the phospholipase A2 family. Group I subfamily. D49 sub-subfamily. The cofactor is Ca(2+). In terms of tissue distribution, expressed by the venom gland.

The protein resides in the secreted. It catalyses the reaction a 1,2-diacyl-sn-glycero-3-phosphocholine + H2O = a 1-acyl-sn-glycero-3-phosphocholine + a fatty acid + H(+). Its function is as follows. Snake venom phospholipase A2 (PLA2) that inhibits collagen-induced platelet aggregation. PLA2 catalyzes the calcium-dependent hydrolysis of the 2-acyl groups in 3-sn-phosphoglycerides. This is Acidic phospholipase A2 S15-109 from Austrelaps superbus (Lowland copperhead snake).